The primary structure comprises 156 residues: Type IV major fimbrial protein FimA (156 aa).

A propeptide spans Met1–Gly7 (leader sequence). Residue Phe8 is modified to N-methylphenylalanine. A helical transmembrane segment spans residues Phe8–Ile28. Disulfide bonds link Cys57–Cys67 and Cys140–Cys153.

It belongs to the N-Me-Phe pilin family. In terms of assembly, the pili are polar flexible filaments of about 5.4 nanometers diameter and 2.5 micrometers average length; they consist of only a single polypeptide chain arranged in a helical configuration of five subunits per turn in the assembled pilus.

Its subcellular location is the fimbrium. The protein localises to the membrane. Major component of the type IV fimbriae that plays an essential role in twitching motility, natural transformation, and protease secretion. This is Type IV major fimbrial protein FimA (fimA) from Dichelobacter nodosus (Bacteroides nodosus).